We begin with the raw amino-acid sequence, 91 residues long: Elongation factor 1-beta (91 aa).

In terms of assembly, homodimer.

In terms of biological role, promotes the exchange of GDP for GTP in EF-1-alpha/GDP, thus allowing the regeneration of EF-1-alpha/GTP that could then be used to form the ternary complex EF-1-alpha/GTP/AAtRNA. In Saccharolobus solfataricus (strain ATCC 35092 / DSM 1617 / JCM 11322 / P2) (Sulfolobus solfataricus), this protein is Elongation factor 1-beta (ef1b).